Consider the following 199-residue polypeptide: Recombination protein RecR (199 aa).

The C4-type zinc finger occupies 58–73 (CSVCNNITDVDPCVFC). Positions 81 to 176 (RLVCVVEEPT…RLTRIATGVP (96 aa)) constitute a Toprim domain.

It belongs to the RecR family.

Functionally, may play a role in DNA repair. It seems to be involved in an RecBC-independent recombinational process of DNA repair. It may act with RecF and RecO. In Acidobacterium capsulatum (strain ATCC 51196 / DSM 11244 / BCRC 80197 / JCM 7670 / NBRC 15755 / NCIMB 13165 / 161), this protein is Recombination protein RecR.